A 495-amino-acid chain; its full sequence is Probable cytosol aminopeptidase (495 aa).

Mn(2+) is bound by residues Lys-258 and Asp-263. Residue Lys-270 is part of the active site. Residues Asp-281, Asp-340, and Glu-342 each contribute to the Mn(2+) site. Arg-344 is an active-site residue.

This sequence belongs to the peptidase M17 family. Mn(2+) serves as cofactor.

The protein localises to the cytoplasm. The enzyme catalyses Release of an N-terminal amino acid, Xaa-|-Yaa-, in which Xaa is preferably Leu, but may be other amino acids including Pro although not Arg or Lys, and Yaa may be Pro. Amino acid amides and methyl esters are also readily hydrolyzed, but rates on arylamides are exceedingly low.. The catalysed reaction is Release of an N-terminal amino acid, preferentially leucine, but not glutamic or aspartic acids.. Its function is as follows. Presumably involved in the processing and regular turnover of intracellular proteins. Catalyzes the removal of unsubstituted N-terminal amino acids from various peptides. In Leptospira interrogans serogroup Icterohaemorrhagiae serovar copenhageni (strain Fiocruz L1-130), this protein is Probable cytosol aminopeptidase.